The following is a 485-amino-acid chain: GlcNAc-binding protein A (485 aa).

Positions 1 to 23 (MKKQPKMTAIALILSGISGLAYG) are cleaved as a signal peptide. Residues 24–201 (HGYVSAVENG…SFYNVIDVKF (178 aa)) enclose the Chitin-binding type-4 domain. A Chitin-binding type-3 domain is found at 437 to 478 (AGTKVLASDGAIYQCKPWPYSGYCQQWTSNATQYQPGTGSHW).

It belongs to the GbpA family.

It localises to the secreted. Its function is as follows. Probably interacts with GlcNAc residues. May promote attachment to both epithelial cell surfaces and chitin. The protein is GlcNAc-binding protein A of Vibrio cholerae serotype O1 (strain M66-2).